A 208-amino-acid polypeptide reads, in one-letter code: uncharacterized protein (208 aa).

Disordered regions lie at residues 1–78 (MDLF…SPTE) and 154–208 (RRRS…PRNY). Residues 40-51 (KNHKKAQPRRTT) are compositionally biased toward basic residues. Polar residues predominate over residues 179–197 (ANSSSPNPTATGSETSYGS).

This is an uncharacterized protein from Caenorhabditis elegans.